A 202-amino-acid polypeptide reads, in one-letter code: MARGPRYKVPKRRRREGKTNYYKRYKMVLSGHPRFVVRKTLKHIIVQIVTAKPEGDITIAAAHSRELYKKYGWMGGLGNTPAAYLTGLLAALRGLKAGIKYAVPDIGLHVPTRGAKVFAAIKAANDVGLKVPVGEEVVPSDDRIRGEHIASWAKMLQEASPEAYERFFSKYISRGFDPTQLPTHFEEVKNRILEEYKDVLGE.

It belongs to the universal ribosomal protein uL18 family. As to quaternary structure, part of the 50S ribosomal subunit. Contacts the 5S and 23S rRNAs.

Its function is as follows. This is one of the proteins that bind and probably mediate the attachment of the 5S RNA into the large ribosomal subunit, where it forms part of the central protuberance. The chain is Large ribosomal subunit protein uL18 from Staphylothermus marinus (strain ATCC 43588 / DSM 3639 / JCM 9404 / F1).